A 124-amino-acid chain; its full sequence is Small ribosomal subunit protein uS12 (124 aa).

Aspartate 90 bears the 3-methylthioaspartic acid mark.

The protein belongs to the universal ribosomal protein uS12 family. In terms of assembly, part of the 30S ribosomal subunit. Contacts proteins S8 and S17. May interact with IF1 in the 30S initiation complex.

In terms of biological role, with S4 and S5 plays an important role in translational accuracy. Functionally, interacts with and stabilizes bases of the 16S rRNA that are involved in tRNA selection in the A site and with the mRNA backbone. Located at the interface of the 30S and 50S subunits, it traverses the body of the 30S subunit contacting proteins on the other side and probably holding the rRNA structure together. The combined cluster of proteins S8, S12 and S17 appears to hold together the shoulder and platform of the 30S subunit. The polypeptide is Small ribosomal subunit protein uS12 (Wolbachia sp. subsp. Drosophila simulans (strain wRi)).